We begin with the raw amino-acid sequence, 573 residues long: Eukaryotic translation initiation factor 3 subunit D (573 aa).

Residues 111-162 (VFTRGGRGQRGARGTERGGRAQLSRGRGGQYGGGYDRGGRSAAGGRGGRRFG) are disordered. The span at 136-156 (GRGGQYGGGYDRGGRSAAGGR) shows a compositional bias: gly residues. Residues 301 to 315 (ALDMVTVNENAVDAP) are RNA gate. The interval 552 to 573 (PAGGLDEEEDNGDLGQEEDDEE) is disordered. Residues 556–573 (LDEEEDNGDLGQEEDDEE) show a composition bias toward acidic residues.

It belongs to the eIF-3 subunit D family. As to quaternary structure, component of the eukaryotic translation initiation factor 3 (eIF-3) complex.

The protein resides in the cytoplasm. Functionally, mRNA cap-binding component of the eukaryotic translation initiation factor 3 (eIF-3) complex, which is involved in protein synthesis of a specialized repertoire of mRNAs and, together with other initiation factors, stimulates binding of mRNA and methionyl-tRNAi to the 40S ribosome. The eIF-3 complex specifically targets and initiates translation of a subset of mRNAs involved in cell proliferation. In the eIF-3 complex, eif3d specifically recognizes and binds the 7-methylguanosine cap of a subset of mRNAs. In Pyricularia oryzae (strain 70-15 / ATCC MYA-4617 / FGSC 8958) (Rice blast fungus), this protein is Eukaryotic translation initiation factor 3 subunit D.